Here is a 654-residue protein sequence, read N- to C-terminus: Potassium voltage-gated channel subfamily A member 4 (654 aa).

Residues Met-1–Ser-305 are Cytoplasmic-facing. A disordered region spans residues Gln-24–Glu-145. Residues Ser-36 to Ala-50 are compositionally biased toward low complexity. Residues Gly-81–Gln-99 are compositionally biased toward basic residues. Ser-122 is subject to Phosphoserine. Residues Ser-122–Glu-137 show a composition bias toward acidic residues. Residues Pro-306–Leu-327 form a helical membrane-spanning segment. Topologically, residues Glu-328–Pro-371 are extracellular. Residue Asn-353 is glycosylated (N-linked (GlcNAc...) asparagine). A helical transmembrane segment spans residues Phe-372–Ala-393. The Cytoplasmic portion of the chain corresponds to Cys-394 to Ile-404. Residues Met-405 to Ala-425 form a helical membrane-spanning segment. Residues Gln-426–Ser-440 are Extracellular-facing. The chain crosses the membrane as a helical; Voltage-sensor span at residues Phe-441 to His-461. Residues Ser-462–Met-476 are Cytoplasmic-facing. An S4-S5 linker region spans residues Lys-463–Met-476. The chain crosses the membrane as a helical span at residues Arg-477–Tyr-498. Residues Phe-499–Ile-512 lie on the Extracellular side of the membrane. The segment at residues Pro-513–Thr-524 is an intramembrane region (helical). The short motif at Thr-525–Asp-530 is the Selectivity filter element. The stretch at Thr-525 to Lys-532 is an intramembrane region. Residues Pro-533–Lys-539 lie on the Extracellular side of the membrane. The helical transmembrane segment at Ile-540–Tyr-568 threads the bilayer. The Cytoplasmic portion of the chain corresponds to His-569 to Val-654. Ser-600 carries the post-translational modification Phosphoserine; by PKA. Over residues Cys-630 to Lys-641 the composition is skewed to basic and acidic residues. The segment at Cys-630–Val-654 is disordered. Positions Thr-652–Val-654 match the PDZ-binding motif.

It belongs to the potassium channel family. A (Shaker) (TC 1.A.1.2) subfamily. Kv1.4/KCNA4 sub-subfamily. Homotetramer and heterotetramer of potassium channel proteins. Interacts with KCNAB1 and KCNAB2. Interacts with DLG1, DLG2 and DLG4 via their PDZ domains. Interacts with SIGMAR1. Detected in a complex with KCNA1. Interacts with KCNA2. Part of a complex containing KCNA1, KCNAB1 and LGI1. Interacts (via cytoplasmic N-terminal domain) with KCNRG. Expressed in the brain, lens and retina.

It is found in the cell membrane. It localises to the cell projection. Its subcellular location is the axon. It carries out the reaction K(+)(in) = K(+)(out). Voltage-gated potassium channel that mediates transmembrane potassium transport in excitable membranes. Forms tetrameric potassium-selective channels through which potassium ions pass in accordance with their electrochemical gradient. The channel alternates between opened and closed conformations in response to the voltage difference across the membrane. Can form functional homotetrameric channels and heterotetrameric channels that contain variable proportions of KCNA1, KCNA2, KCNA4, KCNA5, and possibly other family members as well; channel properties depend on the type of alpha subunits that are part of the channel. Channel properties are modulated by cytoplasmic beta subunits that regulate the subcellular location of the alpha subunits and promote rapid inactivation. In vivo, membranes probably contain a mixture of heteromeric potassium channel complexes, making it difficult to assign currents observed in intact tissues to any particular potassium channel family member. Homotetrameric KCNA4 forms a potassium channel that opens in response to membrane depolarization, followed by rapid spontaneous channel closure. Likewise, a heterotetrameric channel formed by KCNA1 and KCNA4 shows rapid inactivation. The chain is Potassium voltage-gated channel subfamily A member 4 (Kcna4) from Mus musculus (Mouse).